Consider the following 27-residue polypeptide: Augerpeptide hhe6.2 (27 aa).

3 disulfide bridges follow: C4/C13, C8/C20, and C12/C27.

In terms of tissue distribution, expressed by the venom duct.

The protein localises to the secreted. The protein is Augerpeptide hhe6.2 of Hastula hectica (Sea snail).